Reading from the N-terminus, the 502-residue chain is Glycerol kinase (502 aa).

T13 lines the ADP pocket. ATP contacts are provided by T13, T14, and S15. T13 is a sn-glycerol 3-phosphate binding site. R17 serves as a coordination point for ADP. The sn-glycerol 3-phosphate site is built by R83, E84, Y136, and D246. R83, E84, Y136, D246, and Q247 together coordinate glycerol. ADP is bound by residues T268 and G311. The ATP site is built by T268, G311, Q315, and G412. Positions 412 and 416 each coordinate ADP.

This sequence belongs to the FGGY kinase family.

It catalyses the reaction glycerol + ATP = sn-glycerol 3-phosphate + ADP + H(+). The protein operates within polyol metabolism; glycerol degradation via glycerol kinase pathway; sn-glycerol 3-phosphate from glycerol: step 1/1. Its activity is regulated as follows. Inhibited by fructose 1,6-bisphosphate (FBP). Key enzyme in the regulation of glycerol uptake and metabolism. Catalyzes the phosphorylation of glycerol to yield sn-glycerol 3-phosphate. The sequence is that of Glycerol kinase from Francisella tularensis subsp. mediasiatica (strain FSC147).